The chain runs to 330 residues: Ketol-acid reductoisomerase (NADP(+)) (330 aa).

The KARI N-terminal Rossmann domain occupies 2-182; sequence ARMYYDEDAN…GGTRAGVLET (181 aa). NADP(+) is bound by residues 25-28, serine 51, serine 53, and 83-86; these read YGSQ and DEVQ. Residue histidine 108 is part of the active site. Glycine 134 contributes to the NADP(+) binding site. The 146-residue stretch at 183-328 folds into the KARI C-terminal knotted domain; that stretch reads TFREETETDL…QDLRAMMSWL (146 aa). Mg(2+) is bound by residues aspartate 191, glutamate 195, glutamate 227, and glutamate 231. Serine 252 contributes to the substrate binding site.

The protein belongs to the ketol-acid reductoisomerase family. It depends on Mg(2+) as a cofactor.

It catalyses the reaction (2R)-2,3-dihydroxy-3-methylbutanoate + NADP(+) = (2S)-2-acetolactate + NADPH + H(+). The enzyme catalyses (2R,3R)-2,3-dihydroxy-3-methylpentanoate + NADP(+) = (S)-2-ethyl-2-hydroxy-3-oxobutanoate + NADPH + H(+). Its pathway is amino-acid biosynthesis; L-isoleucine biosynthesis; L-isoleucine from 2-oxobutanoate: step 2/4. The protein operates within amino-acid biosynthesis; L-valine biosynthesis; L-valine from pyruvate: step 2/4. Involved in the biosynthesis of branched-chain amino acids (BCAA). Catalyzes an alkyl-migration followed by a ketol-acid reduction of (S)-2-acetolactate (S2AL) to yield (R)-2,3-dihydroxy-isovalerate. In the isomerase reaction, S2AL is rearranged via a Mg-dependent methyl migration to produce 3-hydroxy-3-methyl-2-ketobutyrate (HMKB). In the reductase reaction, this 2-ketoacid undergoes a metal-dependent reduction by NADPH to yield (R)-2,3-dihydroxy-isovalerate. This chain is Ketol-acid reductoisomerase (NADP(+)), found in Microcystis aeruginosa (strain NIES-843 / IAM M-2473).